The chain runs to 262 residues: 3-deoxy-manno-octulosonate cytidylyltransferase (262 aa).

The protein belongs to the KdsB family.

The protein localises to the cytoplasm. It carries out the reaction 3-deoxy-alpha-D-manno-oct-2-ulosonate + CTP = CMP-3-deoxy-beta-D-manno-octulosonate + diphosphate. The protein operates within nucleotide-sugar biosynthesis; CMP-3-deoxy-D-manno-octulosonate biosynthesis; CMP-3-deoxy-D-manno-octulosonate from 3-deoxy-D-manno-octulosonate and CTP: step 1/1. It participates in bacterial outer membrane biogenesis; lipopolysaccharide biosynthesis. In terms of biological role, activates KDO (a required 8-carbon sugar) for incorporation into bacterial lipopolysaccharide in Gram-negative bacteria. In Blochmanniella pennsylvanica (strain BPEN), this protein is 3-deoxy-manno-octulosonate cytidylyltransferase.